A 426-amino-acid chain; its full sequence is MASGHSLLLENAQQVVLVCARGERFLARDALRSLAVLEGASLVVGKDGFIKAIGPADVIQRQFSGETFEEIIDCSGKCILPGLVDAHTHPVWAGERVHEFAMKLAGATYMEIHQAGGGIHFTVERTRQATEEELFRSLQQRLQCMMRAGTTLVECKSGYGLDLETELKMLRVIERARRELDIGISATYCGAHSVPKGKTATEAADDIINNHLPKLKELGRNGEIHVDNIDVFCEKGVFDLDSTRRILQRGKDIGLQINFHGDELHPMKAAELGAELGAQAISHLEEVSDEGIVAMATARCSAILLPTTAYMLRLKQPRARKMLDEGVIVALGSDFNPNAYCFSMPMVMHLACVNMRMSMPEALAAATINAAYALGKSHTHGSLEVGKQGDLIIINSSRWEHLIYQFGGHHELIEYVIAKGKLIYKT.

2 residues coordinate 4-imidazolone-5-propanoate: Y159 and H192. Residue Y159 coordinates N-formimidoyl-L-glutamate. A Fe(3+)-binding site is contributed by H260. Residue H260 coordinates Zn(2+). Position 263 (E263) interacts with 4-imidazolone-5-propanoate. D334 lines the Fe(3+) pocket. D334 contacts Zn(2+). N336 is a binding site for N-formimidoyl-L-glutamate.

Belongs to the metallo-dependent hydrolases superfamily. HutI family. The cofactor is Zn(2+). It depends on Fe(3+) as a cofactor.

It catalyses the reaction 4-imidazolone-5-propanoate + H2O = N-formimidoyl-L-glutamate. The protein operates within amino-acid degradation; L-histidine degradation into L-glutamate; N-formimidoyl-L-glutamate from L-histidine: step 3/3. The polypeptide is Probable imidazolonepropionase (AMDHD1) (Homo sapiens (Human)).